The following is a 430-amino-acid chain: Bone morphogenetic protein 7 (430 aa).

A signal peptide spans 1–29; that stretch reads MHVRSLRAAAPHSFVALWAPLFLLRSALA. A propeptide spanning residues 30–291 is cleaved from the precursor; sequence DFSLDNEVHS…ATEVHLRSIR (262 aa). 4 N-linked (GlcNAc...) asparagine glycosylation sites follow: Asn-186, Asn-301, Asn-320, and Asn-371. The tract at residues 290–310 is disordered; the sequence is IRSTGGKQRSQNRSKTPKNQE. Disulfide bonds link Cys-329-Cys-395, Cys-358-Cys-427, and Cys-362-Cys-429.

The protein belongs to the TGF-beta family. As to quaternary structure, homodimer; disulfide-linked. Interacts with SOSTDC1. Interacts with TWSG1. Interacts with FBN1 (via N-terminal domain) and FBN2. Interacts with type I receptor ACVR1. Interacts with type II receptor ACVR2A. Interacts with NOG; this interaction inhibits canonical BMP signaling. Interacts with SCUBE3. Interacts with ERFE; the interaction inhibits BMP-induced transcription of HAMP. Interacts with TGFBR3.

The protein localises to the secreted. Functionally, growth factor of the TGF-beta superfamily that plays important role in various biological processes, including embryogenesis, hematopoiesis, neurogenesis and skeletal morphogenesis. Initiates the canonical BMP signaling cascade by associating with type I receptor ACVR1 and type II receptor ACVR2A. Once all three components are bound together in a complex at the cell surface, ACVR2A phosphorylates and activates ACVR1. In turn, ACVR1 propagates signal by phosphorylating SMAD1/5/8 that travel to the nucleus and act as activators and repressors of transcription of target genes. For specific functions such as growth cone collapse in developing spinal neurons and chemotaxis of monocytes, also uses BMPR2 as type II receptor. Can also signal through non-canonical pathways such as P38 MAP kinase signaling cascade that promotes brown adipocyte differentiation through activation of target genes, including members of the SOX family of transcription factors. Promotes the expression of HAMP, this is repressed by its interaction with ERFE. The polypeptide is Bone morphogenetic protein 7 (Bmp7) (Mus musculus (Mouse)).